The chain runs to 220 residues: UPF0319 protein YccT (220 aa).

Positions 1 to 20 (MKTGIVTTLIALCLPVSVFA) are cleaved as a signal peptide.

The protein belongs to the UPF0319 family.

The chain is UPF0319 protein YccT from Escherichia coli (strain 55989 / EAEC).